A 1128-amino-acid chain; its full sequence is Membrane-associated guanylate kinase, WW and PDZ domain-containing protein 3 (1128 aa).

Residues 22 to 108 enclose the PDZ 1 domain; sequence WGGPAGPDPE…PVRLKTVRPG (87 aa). The Guanylate kinase-like domain maps to 116–290; that stretch reads RHYLSLQFQK…SMDFRNYMSR (175 aa). 123-130 provides a ligand contact to ATP; the sequence is FQKGSIDH. The segment at 184 to 276 is disordered; the sequence is TYDGNFYGTP…DWMKPVPSYN (93 aa). Positions 193–204 are enriched in pro residues; the sequence is PKPPAEPSPFQP. Positions 238–247 are enriched in acidic residues; the sequence is LPEDEEEEEK. A compositionally biased stretch (basic and acidic residues) spans 257-267; sequence ENKEKHSDSSD. WW domains are found at residues 295 to 328 and 341 to 374; these read EPLP…DPRL and GELP…NPVL. PDZ domains follow at residues 412–494 and 581–657; these read RTSL…TLCR and TIPL…LILR. The disordered stretch occupies residues 658–688; the sequence is GGPPSPTKTGKMKDKQESSGSLEALSDAIPQ. 2 consecutive PDZ domains span residues 728–810 and 852–939; these read DVFL…TVRR and DVCL…VAEE. 2 disordered regions span residues 939-985 and 999-1018; these read EEHR…GKEV and LAQP…SQAQ. Composition is skewed to polar residues over residues 946-956 and 965-974; these read SGTNSAKQSPA and AQSSASSTDR. The PDZ 6 domain occupies 1024–1106; it reads PVELERGPRG…KVLLLLRPGT (83 aa).

Belongs to the MAGUK family.

The protein localises to the cell membrane. Its subcellular location is the cell junction. It is found in the tight junction. In terms of biological role, acts as a scaffolding protein at cell-cell junctions, thereby regulating various cellular and signaling processes. The chain is Membrane-associated guanylate kinase, WW and PDZ domain-containing protein 3 (MAGI3) from Gallus gallus (Chicken).